Here is a 47-residue protein sequence, read N- to C-terminus: Large ribosomal subunit protein bL34 (47 aa).

Belongs to the bacterial ribosomal protein bL34 family.

This chain is Large ribosomal subunit protein bL34, found in Mycobacterium avium (strain 104).